The following is a 183-amino-acid chain: ATP synthase subunit delta (183 aa).

It belongs to the ATPase delta chain family. In terms of assembly, F-type ATPases have 2 components, F(1) - the catalytic core - and F(0) - the membrane proton channel. F(1) has five subunits: alpha(3), beta(3), gamma(1), delta(1), epsilon(1). F(0) has three main subunits: a(1), b(2) and c(10-14). The alpha and beta chains form an alternating ring which encloses part of the gamma chain. F(1) is attached to F(0) by a central stalk formed by the gamma and epsilon chains, while a peripheral stalk is formed by the delta and b chains.

Its subcellular location is the cell inner membrane. F(1)F(0) ATP synthase produces ATP from ADP in the presence of a proton or sodium gradient. F-type ATPases consist of two structural domains, F(1) containing the extramembraneous catalytic core and F(0) containing the membrane proton channel, linked together by a central stalk and a peripheral stalk. During catalysis, ATP synthesis in the catalytic domain of F(1) is coupled via a rotary mechanism of the central stalk subunits to proton translocation. In terms of biological role, this protein is part of the stalk that links CF(0) to CF(1). It either transmits conformational changes from CF(0) to CF(1) or is implicated in proton conduction. The chain is ATP synthase subunit delta from Nitratidesulfovibrio vulgaris (strain ATCC 29579 / DSM 644 / CCUG 34227 / NCIMB 8303 / VKM B-1760 / Hildenborough) (Desulfovibrio vulgaris).